Consider the following 419-residue polypeptide: Pyrrolysine--tRNA ligase (419 aa).

Residues 100–157 form a disordered region; the sequence is APKVKKAMPKSVSRAPKPLENSVSAKASTNTSRSVPSPAKSTPNSSVPASAPAPSLTR. Over residues 120–141 the composition is skewed to polar residues; sequence NSVSAKASTNTSRSVPSPAKST. A compositionally biased stretch (low complexity) spans 142 to 154; that stretch reads PNSSVPASAPAPS.

This sequence belongs to the class-II aminoacyl-tRNA synthetase family.

The protein localises to the cytoplasm. The catalysed reaction is tRNA(Pyl) + L-pyrrolysine + ATP = L-pyrrolysyl-tRNA(Pyl) + AMP + diphosphate. Functionally, catalyzes the attachment of pyrrolysine to tRNA(Pyl). Pyrrolysine is a lysine derivative encoded by the termination codon UAG. The sequence is that of Pyrrolysine--tRNA ligase (pylS) from Methanosarcina barkeri.